Consider the following 164-residue polypeptide: Phosphopantetheine adenylyltransferase (164 aa).

Ser-9 serves as a coordination point for substrate. Residues Ser-9–Phe-10 and His-17 each bind ATP. 3 residues coordinate substrate: Lys-41, Leu-73, and Lys-87. Residues Gly-88–Arg-90, Glu-98, and Tyr-123–Ser-129 each bind ATP.

Belongs to the bacterial CoaD family. As to quaternary structure, homohexamer. Requires Mg(2+) as cofactor.

It localises to the cytoplasm. It catalyses the reaction (R)-4'-phosphopantetheine + ATP + H(+) = 3'-dephospho-CoA + diphosphate. It participates in cofactor biosynthesis; coenzyme A biosynthesis; CoA from (R)-pantothenate: step 4/5. Its function is as follows. Reversibly transfers an adenylyl group from ATP to 4'-phosphopantetheine, yielding dephospho-CoA (dPCoA) and pyrophosphate. This Clostridium perfringens (strain SM101 / Type A) protein is Phosphopantetheine adenylyltransferase.